Consider the following 402-residue polypeptide: Probable tRNA sulfurtransferase (402 aa).

One can recognise a THUMP domain in the interval 61 to 166 (EEIMKRISKV…SDAAYLYSRV (106 aa)). Residues 184 to 185 (ML), 209 to 210 (HF), Arg266, Gly288, and Gln297 each bind ATP.

Belongs to the ThiI family.

The protein localises to the cytoplasm. It catalyses the reaction [ThiI sulfur-carrier protein]-S-sulfanyl-L-cysteine + a uridine in tRNA + 2 reduced [2Fe-2S]-[ferredoxin] + ATP + H(+) = [ThiI sulfur-carrier protein]-L-cysteine + a 4-thiouridine in tRNA + 2 oxidized [2Fe-2S]-[ferredoxin] + AMP + diphosphate. It carries out the reaction [ThiS sulfur-carrier protein]-C-terminal Gly-Gly-AMP + S-sulfanyl-L-cysteinyl-[cysteine desulfurase] + AH2 = [ThiS sulfur-carrier protein]-C-terminal-Gly-aminoethanethioate + L-cysteinyl-[cysteine desulfurase] + A + AMP + 2 H(+). It functions in the pathway cofactor biosynthesis; thiamine diphosphate biosynthesis. Functionally, catalyzes the ATP-dependent transfer of a sulfur to tRNA to produce 4-thiouridine in position 8 of tRNAs, which functions as a near-UV photosensor. Also catalyzes the transfer of sulfur to the sulfur carrier protein ThiS, forming ThiS-thiocarboxylate. This is a step in the synthesis of thiazole, in the thiamine biosynthesis pathway. The sulfur is donated as persulfide by IscS. The protein is Probable tRNA sulfurtransferase of Macrococcus caseolyticus (strain JCSC5402) (Macrococcoides caseolyticum).